Consider the following 106-residue polypeptide: Cell division protein FtsB (106 aa).

Residues 1–3 are Cytoplasmic-facing; that stretch reads MRL. The helical transmembrane segment at 4-21 threads the bilayer; the sequence is LTLIFVALIALLQYPLWL. Topologically, residues 22–106 are periplasmic; sequence GKGSWLRVWD…SPPAALTGAQ (85 aa). The stretch at 31-73 forms a coiled coil; it reads DLNQKIVAQKAVNAELKLRNDTLDAEVRDLKQGNAAIEERARS.

It belongs to the FtsB family. As to quaternary structure, part of a complex composed of FtsB, FtsL and FtsQ.

The protein localises to the cell inner membrane. Functionally, essential cell division protein. May link together the upstream cell division proteins, which are predominantly cytoplasmic, with the downstream cell division proteins, which are predominantly periplasmic. The chain is Cell division protein FtsB from Methylobacillus flagellatus (strain ATCC 51484 / DSM 6875 / VKM B-1610 / KT).